The following is a 281-amino-acid chain: Lipoyl synthase (281 aa).

7 residues coordinate [4Fe-4S] cluster: Cys-35, Cys-40, Cys-46, Cys-61, Cys-65, Cys-68, and Ser-274. Residues Phe-47–Arg-263 form the Radical SAM core domain.

Belongs to the radical SAM superfamily. Lipoyl synthase family. Requires [4Fe-4S] cluster as cofactor.

It localises to the cytoplasm. It catalyses the reaction [[Fe-S] cluster scaffold protein carrying a second [4Fe-4S](2+) cluster] + N(6)-octanoyl-L-lysyl-[protein] + 2 oxidized [2Fe-2S]-[ferredoxin] + 2 S-adenosyl-L-methionine + 4 H(+) = [[Fe-S] cluster scaffold protein] + N(6)-[(R)-dihydrolipoyl]-L-lysyl-[protein] + 4 Fe(3+) + 2 hydrogen sulfide + 2 5'-deoxyadenosine + 2 L-methionine + 2 reduced [2Fe-2S]-[ferredoxin]. It functions in the pathway protein modification; protein lipoylation via endogenous pathway; protein N(6)-(lipoyl)lysine from octanoyl-[acyl-carrier-protein]: step 2/2. Its function is as follows. Catalyzes the radical-mediated insertion of two sulfur atoms into the C-6 and C-8 positions of the octanoyl moiety bound to the lipoyl domains of lipoate-dependent enzymes, thereby converting the octanoylated domains into lipoylated derivatives. In Trichlorobacter lovleyi (strain ATCC BAA-1151 / DSM 17278 / SZ) (Geobacter lovleyi), this protein is Lipoyl synthase.